The chain runs to 357 residues: GDP-polyphosphate phosphotransferase (357 aa).

Positions 1–83 (MSEEPTVSPP…DSTSASLPAN (83 aa)) are disordered. Residues 14–25 (QPAAQPAKPARP) are compositionally biased toward low complexity. Residues 26 to 40 (AARRAPRKPATRRPR) show a composition bias toward basic residues.

Belongs to the polyphosphate kinase 2 (PPK2) family. Class I subfamily. In terms of assembly, homotetramer. Also forms octamers. It depends on Mg(2+) as a cofactor. Mn(2+) serves as cofactor.

It carries out the reaction [phosphate](n) + GTP = [phosphate](n+1) + GDP. The catalysed reaction is [phosphate](n) + ATP = [phosphate](n+1) + ADP. Uses inorganic polyphosphate (polyP) as a donor to convert GDP to GTP and ADP to ATP. Shows a preference for GDP. Can also catalyze the synthesis of polyP from GTP or ATP, but the rate of polyP utilization is 75-fold greater than the rate of polyP synthesis. This is GDP-polyphosphate phosphotransferase from Pseudomonas aeruginosa (strain ATCC 15692 / DSM 22644 / CIP 104116 / JCM 14847 / LMG 12228 / 1C / PRS 101 / PAO1).